We begin with the raw amino-acid sequence, 256 residues long: Thrombin-like enzyme cerastocytin (256 aa).

A signal peptide spans Met1–Ala18. A propeptide spanning residues Gln19–Leu24 is cleaved from the precursor. The Peptidase S1 domain maps to Val25–Ala247. 5 disulfide bridges follow: Cys31/Cys161, Cys98/Cys254, Cys140/Cys208, Cys172/Cys187, and Cys198/Cys223. The N-linked (GlcNAc...) asparagine glycan is linked to Asn44. Residues His65 and Asp108 each act as charge relay system in the active site. Residues Asn119, Asn120, and Asn152 are each glycosylated (N-linked (GlcNAc...) asparagine). The Charge relay system role is filled by Ser202.

Belongs to the peptidase S1 family. Snake venom subfamily. In terms of assembly, monomer. In terms of tissue distribution, expressed by the venom gland.

It localises to the secreted. With respect to regulation, its platelets aggregating activity is inhibited by chlorpromazine, theophylline mepacrine. Its platelet aggregating activity and its amidolytic activity are inhibited by PMSF, TPCK, TLCK and soybean trypsin inhibitors. Is unaffected by hirudin or by antithrombin-III in the presence of heparin. Its function is as follows. Thrombin-like snake venom serine protease which potently induces platelet aggregation and has fibrinogenolytic activities. Clots purified fibrinogen and hydrolyzes alpha-chains (FGA). High concentrations of this enzyme also cleave prothrombin (F2) and factor X (F10). Is also able to activate factor XIII (F8). The chain is Thrombin-like enzyme cerastocytin from Cerastes cerastes (Horned desert viper).